The primary structure comprises 513 residues: MSNNNYPPPPNPPNYQGEEQVHNVQPDLENNQEKYYAEQPQPSQQFEESFKIDKPKWNDWPFTVFFLLTVAGFIAIAGITLNALKKTYGLQGSSIYNSTDTFTLNTNTIILFGFIIVVGVVLSVLIIVYARMAPRVFITTGLILNIILGLGTCIYYFVAHYYSAAIVFLVFTLFTAWCYWSCRHRIPFSATVLEITIDVMKRYPSTLITSFIGIIVSGLFSTLFSVVIVATYVKYDPDSQGCDVAGGGCSQSKLIGVLVFVFFAGYYISEVIKNVIHITIAGIYGTWYYLSNSDQGEPKHPALGAFKRAMTYCFGSVCFGSLIVSIIQLIRSFVQILKQNAFGSGDNCAGCGFLILDFVLGFIDWIVRYFNHYAYCYVALYGKSYLKSARDTFDLIRFKGMDALINDCFINTSLNLYSMFVGYVVALLAYFYLKFTDPAYNSSGTFYAPVVAFSFLISGQITRIALTVISSGISTFFVALAKDPEVFQMTNRDRFDEIFRNYPQVLQKITSDH.

The span at 1 to 13 (MSNNNYPPPPNPP) shows a compositional bias: pro residues. Residues 1–41 (MSNNNYPPPPNPPNYQGEEQVHNVQPDLENNQEKYYAEQPQ) form a disordered region. At 1 to 60 (MSNNNYPPPPNPPNYQGEEQVHNVQPDLENNQEKYYAEQPQPSQQFEESFKIDKPKWNDW) the chain is on the cytoplasmic side. The chain crosses the membrane as a helical span at residues 61–81 (PFTVFFLLTVAGFIAIAGITL). Residues 82 to 108 (NALKKTYGLQGSSIYNSTDTFTLNTNT) are Extracellular-facing. N97 carries N-linked (GlcNAc...) asparagine glycosylation. A helical membrane pass occupies residues 109-129 (IILFGFIIVVGVVLSVLIIVY). Over 130–136 (ARMAPRV) the chain is Cytoplasmic. Residues 137 to 157 (FITTGLILNIILGLGTCIYYF) form a helical membrane-spanning segment. Topologically, residues 158–163 (VAHYYS) are extracellular. Residues 164–182 (AAIVFLVFTLFTAWCYWSC) traverse the membrane as a helical segment. The Cytoplasmic portion of the chain corresponds to 183-210 (RHRIPFSATVLEITIDVMKRYPSTLITS). A helical transmembrane segment spans residues 211–231 (FIGIIVSGLFSTLFSVVIVAT). Residues 232-251 (YVKYDPDSQGCDVAGGGCSQ) lie on the Extracellular side of the membrane. The helical transmembrane segment at 252-272 (SKLIGVLVFVFFAGYYISEVI) threads the bilayer. Residues 273–309 (KNVIHITIAGIYGTWYYLSNSDQGEPKHPALGAFKRA) lie on the Cytoplasmic side of the membrane. Residues 310–330 (MTYCFGSVCFGSLIVSIIQLI) traverse the membrane as a helical segment. At 331 to 346 (RSFVQILKQNAFGSGD) the chain is on the extracellular side. A helical membrane pass occupies residues 347 to 367 (NCAGCGFLILDFVLGFIDWIV). At 368 to 412 (RYFNHYAYCYVALYGKSYLKSARDTFDLIRFKGMDALINDCFINT) the chain is on the cytoplasmic side. Residues 413–433 (SLNLYSMFVGYVVALLAYFYL) form a helical membrane-spanning segment. Residues 434–460 (KFTDPAYNSSGTFYAPVVAFSFLISGQ) lie on the Extracellular side of the membrane. The N-linked (GlcNAc...) asparagine glycan is linked to N441. The chain crosses the membrane as a helical span at residues 461 to 481 (ITRIALTVISSGISTFFVALA). The Cytoplasmic portion of the chain corresponds to 482–513 (KDPEVFQMTNRDRFDEIFRNYPQVLQKITSDH).

It belongs to the CTL (choline transporter-like) family.

It localises to the cell membrane. Functionally, probably involved in transport through the plasma membrane. This is Protein PNS1 (PNS1) from Debaryomyces hansenii (strain ATCC 36239 / CBS 767 / BCRC 21394 / JCM 1990 / NBRC 0083 / IGC 2968) (Yeast).